We begin with the raw amino-acid sequence, 403 residues long: 3-hydroxy-3-methylglutaryl-coenzyme A reductase (403 aa).

Active-site charge relay system residues include Glu-99 and Asp-303. The active-site Proton donor is His-398.

The protein belongs to the HMG-CoA reductase family.

It carries out the reaction (R)-mevalonate + 2 NADP(+) + CoA = (3S)-3-hydroxy-3-methylglutaryl-CoA + 2 NADPH + 2 H(+). It participates in metabolic intermediate biosynthesis; (R)-mevalonate biosynthesis; (R)-mevalonate from acetyl-CoA: step 3/3. With respect to regulation, is competitively inhibited by (R)-HMG-CoA and lovastatin (formerly called mevinolin). Catalyzes the NADPH-dependent reductive deacylation of (S)-3-hydroxy-3-methylglutaryl-CoA (HMG-CoA) to (R)-mevalonate. Functions in the mevalonate (MVA) pathway leading to isopentenyl diphosphate (IPP), a key precursor for the biosynthesis of isoprenoid compounds such as archaeal membrane lipids. Is also able to catalyze the reduction of mevaldehyde to mevalonate and the oxidative acylation of mevaldehyde to HMG-CoA. In Haloferax volcanii (strain ATCC 29605 / DSM 3757 / JCM 8879 / NBRC 14742 / NCIMB 2012 / VKM B-1768 / DS2) (Halobacterium volcanii), this protein is 3-hydroxy-3-methylglutaryl-coenzyme A reductase (hmgA).